The chain runs to 433 residues: Phosphomethylpyrimidine synthase (433 aa).

Residues asparagine 66, methionine 94, tyrosine 123, histidine 162, 184 to 186, 225 to 228, and glutamate 264 contribute to the substrate site; these read SRG and DALR. Histidine 268 is a binding site for Zn(2+). Position 291 (tyrosine 291) interacts with substrate. Zn(2+) is bound at residue histidine 332. Residues cysteine 408, cysteine 411, and cysteine 415 each contribute to the [4Fe-4S] cluster site.

Belongs to the ThiC family. Requires [4Fe-4S] cluster as cofactor.

The enzyme catalyses 5-amino-1-(5-phospho-beta-D-ribosyl)imidazole + S-adenosyl-L-methionine = 4-amino-2-methyl-5-(phosphooxymethyl)pyrimidine + CO + 5'-deoxyadenosine + formate + L-methionine + 3 H(+). The protein operates within cofactor biosynthesis; thiamine diphosphate biosynthesis. Catalyzes the synthesis of the hydroxymethylpyrimidine phosphate (HMP-P) moiety of thiamine from aminoimidazole ribotide (AIR) in a radical S-adenosyl-L-methionine (SAM)-dependent reaction. The polypeptide is Phosphomethylpyrimidine synthase (Saccharolobus islandicus (strain M.16.27) (Sulfolobus islandicus)).